The chain runs to 333 residues: Glycerol-3-phosphate dehydrogenase [NAD(P)+] (333 aa).

Residues Ser10, Trp11, and Lys105 each contribute to the NADPH site. Residues Lys105, Gly136, and Thr138 each contribute to the sn-glycerol 3-phosphate site. An NADPH-binding site is contributed by Ala140. The sn-glycerol 3-phosphate site is built by Lys191, Asp244, Ser254, Arg255, and Asn256. The Proton acceptor role is filled by Lys191. An NADPH-binding site is contributed by Arg255. Positions 279 and 281 each coordinate NADPH.

The protein belongs to the NAD-dependent glycerol-3-phosphate dehydrogenase family.

It is found in the cytoplasm. It catalyses the reaction sn-glycerol 3-phosphate + NAD(+) = dihydroxyacetone phosphate + NADH + H(+). It carries out the reaction sn-glycerol 3-phosphate + NADP(+) = dihydroxyacetone phosphate + NADPH + H(+). It functions in the pathway membrane lipid metabolism; glycerophospholipid metabolism. Functionally, catalyzes the reduction of the glycolytic intermediate dihydroxyacetone phosphate (DHAP) to sn-glycerol 3-phosphate (G3P), the key precursor for phospholipid synthesis. In Trichlorobacter lovleyi (strain ATCC BAA-1151 / DSM 17278 / SZ) (Geobacter lovleyi), this protein is Glycerol-3-phosphate dehydrogenase [NAD(P)+].